Here is a 100-residue protein sequence, read N- to C-terminus: Urease subunit gamma (100 aa).

This sequence belongs to the urease gamma subunit family. Heterotrimer of UreA (gamma), UreB (beta) and UreC (alpha) subunits. Three heterotrimers associate to form the active enzyme.

Its subcellular location is the cytoplasm. It catalyses the reaction urea + 2 H2O + H(+) = hydrogencarbonate + 2 NH4(+). It participates in nitrogen metabolism; urea degradation; CO(2) and NH(3) from urea (urease route): step 1/1. In Synechococcus sp. (strain WH7805), this protein is Urease subunit gamma.